A 79-amino-acid chain; its full sequence is Acyl carrier protein (79 aa).

The Carrier domain maps to S2 to A77. An O-(pantetheine 4'-phosphoryl)serine modification is found at S37.

This sequence belongs to the acyl carrier protein (ACP) family. In terms of processing, 4'-phosphopantetheine is transferred from CoA to a specific serine of apo-ACP by AcpS. This modification is essential for activity because fatty acids are bound in thioester linkage to the sulfhydryl of the prosthetic group.

Its subcellular location is the cytoplasm. It functions in the pathway lipid metabolism; fatty acid biosynthesis. In terms of biological role, carrier of the growing fatty acid chain in fatty acid biosynthesis. This is Acyl carrier protein from Nitrobacter hamburgensis (strain DSM 10229 / NCIMB 13809 / X14).